Consider the following 81-residue polypeptide: Photosystem I iron-sulfur center (81 aa).

2 4Fe-4S ferredoxin-type domains span residues 2-31 (SHSVKIYDTCIGCTQCVRACPTDVLEMIPW) and 39-68 (IASAPRTEDCVGCKRCESACPTDFLSVRVY). Residues Cys-11, Cys-14, Cys-17, Cys-21, Cys-48, Cys-51, Cys-54, and Cys-58 each coordinate [4Fe-4S] cluster.

In terms of assembly, the eukaryotic PSI reaction center is composed of at least 11 subunits. The cofactor is [4Fe-4S] cluster.

The protein resides in the plastid thylakoid membrane. It carries out the reaction reduced [plastocyanin] + hnu + oxidized [2Fe-2S]-[ferredoxin] = oxidized [plastocyanin] + reduced [2Fe-2S]-[ferredoxin]. Functionally, apoprotein for the two 4Fe-4S centers FA and FB of photosystem I (PSI); essential for photochemical activity. FB is the terminal electron acceptor of PSI, donating electrons to ferredoxin. The C-terminus interacts with PsaA/B/D and helps assemble the protein into the PSI complex. Required for binding of PsaD and PsaE to PSI. PSI is a plastocyanin-ferredoxin oxidoreductase, converting photonic excitation into a charge separation, which transfers an electron from the donor P700 chlorophyll pair to the spectroscopically characterized acceptors A0, A1, FX, FA and FB in turn. The polypeptide is Photosystem I iron-sulfur center (Cuscuta gronovii (Common dodder)).